The sequence spans 263 residues: Leucyl/phenylalanyl-tRNA--protein transferase (263 aa).

This sequence belongs to the L/F-transferase family.

Its subcellular location is the cytoplasm. It catalyses the reaction N-terminal L-lysyl-[protein] + L-leucyl-tRNA(Leu) = N-terminal L-leucyl-L-lysyl-[protein] + tRNA(Leu) + H(+). It carries out the reaction N-terminal L-arginyl-[protein] + L-leucyl-tRNA(Leu) = N-terminal L-leucyl-L-arginyl-[protein] + tRNA(Leu) + H(+). The catalysed reaction is L-phenylalanyl-tRNA(Phe) + an N-terminal L-alpha-aminoacyl-[protein] = an N-terminal L-phenylalanyl-L-alpha-aminoacyl-[protein] + tRNA(Phe). Its function is as follows. Functions in the N-end rule pathway of protein degradation where it conjugates Leu, Phe and, less efficiently, Met from aminoacyl-tRNAs to the N-termini of proteins containing an N-terminal arginine or lysine. This is Leucyl/phenylalanyl-tRNA--protein transferase from Novosphingobium aromaticivorans (strain ATCC 700278 / DSM 12444 / CCUG 56034 / CIP 105152 / NBRC 16084 / F199).